The chain runs to 645 residues: 1-deoxy-D-xylulose-5-phosphate synthase (645 aa).

Thiamine diphosphate is bound by residues histidine 83 and 124–126; that span reads GHS. Aspartate 155 contacts Mg(2+). Residues 156–157, asparagine 184, tyrosine 295, and glutamate 376 each bind thiamine diphosphate; that span reads GS. Mg(2+) is bound at residue asparagine 184.

Belongs to the transketolase family. DXPS subfamily. Homodimer. The cofactor is Mg(2+). It depends on thiamine diphosphate as a cofactor.

It carries out the reaction D-glyceraldehyde 3-phosphate + pyruvate + H(+) = 1-deoxy-D-xylulose 5-phosphate + CO2. Its pathway is metabolic intermediate biosynthesis; 1-deoxy-D-xylulose 5-phosphate biosynthesis; 1-deoxy-D-xylulose 5-phosphate from D-glyceraldehyde 3-phosphate and pyruvate: step 1/1. Functionally, catalyzes the acyloin condensation reaction between C atoms 2 and 3 of pyruvate and glyceraldehyde 3-phosphate to yield 1-deoxy-D-xylulose-5-phosphate (DXP). The protein is 1-deoxy-D-xylulose-5-phosphate synthase of Desulfotalea psychrophila (strain LSv54 / DSM 12343).